The primary structure comprises 856 residues: Envelope glycoprotein GP350 (856 aa).

Over 1–809 the chain is Virion surface; sequence MEAALLVCQY…TSQPRFSNLS (809 aa). N-linked (GlcNAc...) asparagine; by host glycans are attached at residues Asn47, Asn87, Asn114, Asn166, Asn169, Asn195, Asn229, Asn277, Asn318, Asn328, Asn345, Asn356, Asn378, Asn386, Asn411, Asn435, Asn443, Asn457, Asn497, Asn519, Asn533, Asn554, Asn568, Asn582, Asn585, Asn603, and Asn614. The segment at 421–779 is disordered; it reads FSKAPESTTT…PPSTSSELRP (359 aa). Over residues 427 to 437 the composition is skewed to low complexity; that stretch reads STTTSPTSNTT. Over residues 442–488 the composition is skewed to polar residues; sequence PNTTTGLPSSTHVPTNLTAPASTGPTVSTADVTSPTPAGTTSGASPV. Low complexity predominate over residues 507–570; it reads TSPTPAVTTP…AVTTPTPNAT (64 aa). Over residues 575-616 the composition is skewed to polar residues; sequence GETSPQANTTNHTLGGTSSTPVVTSQPKNATSAVTTGQHNIT. The segment covering 617–631 has biased composition (low complexity); the sequence is SSSTSSMSLRPSSIS. Asn650 carries N-linked (GlcNAc...) asparagine; by host glycosylation. Over residues 654-669 the composition is skewed to low complexity; sequence VTPASTSTHHVSTSSP. The span at 674-690 shows a compositional bias: polar residues; sequence GTTSQASGPGNSSTSTK. 4 N-linked (GlcNAc...) asparagine; by host glycosylation sites follow: Asn684, Asn695, Asn704, and Asn729. The segment covering 703–730 has biased composition (polar residues); the sequence is KNATSPQAPSGQKTAVPTVTSTGGKANS. Residues 731–741 show a composition bias toward low complexity; the sequence is TTGGKHTTGHG. Residues 743-776 show a composition bias toward polar residues; that stretch reads RTSTEPTTDYGGDSTTPRTRYNATTYLPPSTSSE. Residues Asn764 and Asn807 are each glycosylated (N-linked (GlcNAc...) asparagine; by host). Residues 810–830 traverse the membrane as a helical segment; it reads MLVLQWASLAVLTLLLLLVMA. Residues 831 to 856 are Intravirion-facing; sequence DCAFRRNLSTSHTYTTPPYDDAETYV.

This sequence belongs to the Epstein-Barr GP350 family. In terms of assembly, interacts with host CR2. In terms of processing, extensively glycosylated.

The protein localises to the virion membrane. The protein resides in the host membrane. Functionally, initiates virion attachment to host B-lymphocyte cell, leading to virus entry. Acts by binding to host CR2 at the surface of B-lymphocytes, facilitating the binding of viral glycoprotein gp42 to HLA class II molecules. Attachment triggers virion-host membrane fusion and invasion of the host cell. In Homo sapiens (Human), this protein is Envelope glycoprotein GP350.